The chain runs to 475 residues: Aspartyl/glutamyl-tRNA(Asn/Gln) amidotransferase subunit B (475 aa).

The protein belongs to the GatB/GatE family. GatB subfamily. As to quaternary structure, heterotrimer of A, B and C subunits.

It catalyses the reaction L-glutamyl-tRNA(Gln) + L-glutamine + ATP + H2O = L-glutaminyl-tRNA(Gln) + L-glutamate + ADP + phosphate + H(+). It carries out the reaction L-aspartyl-tRNA(Asn) + L-glutamine + ATP + H2O = L-asparaginyl-tRNA(Asn) + L-glutamate + ADP + phosphate + 2 H(+). Functionally, allows the formation of correctly charged Asn-tRNA(Asn) or Gln-tRNA(Gln) through the transamidation of misacylated Asp-tRNA(Asn) or Glu-tRNA(Gln) in organisms which lack either or both of asparaginyl-tRNA or glutaminyl-tRNA synthetases. The reaction takes place in the presence of glutamine and ATP through an activated phospho-Asp-tRNA(Asn) or phospho-Glu-tRNA(Gln). The protein is Aspartyl/glutamyl-tRNA(Asn/Gln) amidotransferase subunit B of Bacillus cereus (strain G9842).